The chain runs to 317 residues: tRNA(Met) cytidine acetate ligase (317 aa).

ATP-binding positions include 6-19, Gly-100, Asn-157, and Arg-182; that span reads IAEYNPFHNGHIYQ.

It belongs to the TmcAL family.

It is found in the cytoplasm. The enzyme catalyses cytidine(34) in elongator tRNA(Met) + acetate + ATP = N(4)-acetylcytidine(34) in elongator tRNA(Met) + AMP + diphosphate. In terms of biological role, catalyzes the formation of N(4)-acetylcytidine (ac(4)C) at the wobble position of elongator tRNA(Met), using acetate and ATP as substrates. First activates an acetate ion to form acetyladenylate (Ac-AMP) and then transfers the acetyl group to tRNA to form ac(4)C34. The chain is tRNA(Met) cytidine acetate ligase from Mesomycoplasma hyopneumoniae (strain J / ATCC 25934 / NCTC 10110) (Mycoplasma hyopneumoniae).